The sequence spans 337 residues: ERI1 exoribonuclease 3 (337 aa).

In terms of domain architecture, Exonuclease spans 146–320 (FLVLDFEATC…DDCKNIANIM (175 aa)). Residues Asp-150, Glu-152, and Asp-249 each coordinate Mg(2+). Glu-152 serves as the catalytic Proton acceptor. Glu-152 contributes to the AMP binding site. His-307 functions as the Proton acceptor in the catalytic mechanism. His-307 serves as a coordination point for AMP. Residue Asp-312 coordinates Mg(2+).

As to quaternary structure, interacts with PRNP. Mg(2+) is required as a cofactor. Highly expressed in the brain, heart, thyroid and testis. Expressed at low levels in the muscle cells, liver, pancreas and kidney.

In Mus musculus (Mouse), this protein is ERI1 exoribonuclease 3 (Eri3).